The following is a 465-amino-acid chain: Hepatocyte nuclear factor 6 (465 aa).

Disordered stretches follow at residues 15–84 and 119–141; these read GVSH…GPLH and SDKF…HQRL. Basic residues predominate over residues 123–140; the sequence is PHHHHHHHHHHHPHHHQR. A DNA-binding region (CUT) is located at residues 283 to 369; sequence GSNSGQMEEI…QRMSALRLAA (87 aa). The homeobox DNA-binding region spans 385–444; it reads PKKPRLVFTDVQRRTLHAIFKENKRPSKELQITISQQLGLELSTVSNFFMNARRRSLDKW. The interval 443-465 is disordered; it reads KWQDEGGSNSGSSSSSSSTCTKA. The segment covering 448 to 465 has biased composition (low complexity); it reads GGSNSGSSSSSSSTCTKA.

It belongs to the CUT homeobox family. Binds DNA as a monomer.

The protein resides in the nucleus. Functionally, transcriptional activator. Binds the consensus sequence 5'-DHWATTGAYTWWD-3' on a variety of gene promoters such as those of HNF3B and TTR. Important for liver genes transcription. Stimulates the expression of Onecut3 in the developing endoderm. This Mus musculus (Mouse) protein is Hepatocyte nuclear factor 6 (Onecut1).